Here is a 182-residue protein sequence, read N- to C-terminus: Large ribosomal subunit protein uL10 (182 aa).

Belongs to the universal ribosomal protein uL10 family. In terms of assembly, part of the ribosomal stalk of the 50S ribosomal subunit. The N-terminus interacts with L11 and the large rRNA to form the base of the stalk. The C-terminus forms an elongated spine to which L12 dimers bind in a sequential fashion forming a multimeric L10(L12)X complex.

Its function is as follows. Forms part of the ribosomal stalk, playing a central role in the interaction of the ribosome with GTP-bound translation factors. In Microcystis aeruginosa (strain NIES-843 / IAM M-2473), this protein is Large ribosomal subunit protein uL10.